The primary structure comprises 235 residues: Motile sperm domain-containing protein 3 (235 aa).

Disordered stretches follow at residues 1–25 and 143–171; these read MRRGAPQDQELVGPGPPGRGSRGAP and ELQGQPDPAPRPGPPAGTPPPTARHFQEH. The MSP domain maps to 33–145; sequence PVLVFPPDLV…RAPAYPLELQ (113 aa). A compositionally biased stretch (pro residues) spans 149–164; it reads DPAPRPGPPAGTPPPT. Transmembrane regions (helical) follow at residues 180-200 and 213-233; these read SFLLFLLTGIVSVAFLLLPLP and VSLGQKLVAAYVLGLLTMVFL.

The protein resides in the membrane. In Homo sapiens (Human), this protein is Motile sperm domain-containing protein 3 (MOSPD3).